Here is a 1478-residue protein sequence, read N- to C-terminus: Fanconi anemia group D2 protein homolog (1478 aa).

The disordered stretch occupies residues 33–53 (NISVESSSGGSEENIPASQEH). The segment covering 35–45 (SVESSSGGSEE) has biased composition (low complexity). Lys-595 participates in a covalent cross-link: Glycyl lysine isopeptide (Lys-Gly) (interchain with G-Cter in ubiquitin). Disordered regions lie at residues 896–918 (NQNQKRPGPKPAAKLNATLPEPD) and 1420–1478 (TPRS…SKCF). A compositionally biased stretch (acidic residues) spans 1429–1442 (ENSDDELPADDTSV). The segment covering 1468–1478 (RSKSSSRSKCF) has biased composition (basic residues).

The protein belongs to the Fanconi anemia protein FANCD2 family. As to quaternary structure, homodimer; cannot be ubiquitinated and does not bind DNA. Part of a Fanci-Fancd2 heterodimeric complex that binds and scans dsDNA for DNA damage. Interacts with Fancl (via C-terminus). In terms of processing, monoubiquitinated by Fancl in response to ionising radiation.

It localises to the nucleus. Its function is as follows. Required for maintenance of chromosomal stability. Together with Fancl, and probably Fanci, involved in DNA repair of damage caused by agents that induce interstrand cross-links but not agents that cause double strand breaks. Required for S phase checkpoint activation in response to ionizing radiation induced DNA damage. This Drosophila melanogaster (Fruit fly) protein is Fanconi anemia group D2 protein homolog.